The chain runs to 388 residues: Pepsin A-3 (388 aa).

The N-terminal stretch at 1–15 is a signal peptide; the sequence is MKWLLLLGLVALSEC. The propeptide at 16–62 is activation peptide; that stretch reads IMYKVPLIRKKSLRRTLSERGLLKDFLKKHNLNPARKYFPQWKAPTL. One can recognise a Peptidase A1 domain in the interval 76-385; that stretch reads YFGTIGIGTP…DRANNQVGLA (310 aa). Asp-94 is a catalytic residue. Intrachain disulfides connect Cys-107-Cys-112 and Cys-268-Cys-272. The active site involves Asp-277. An intrachain disulfide couples Cys-311 to Cys-344.

Belongs to the peptidase A1 family.

Its subcellular location is the secreted. It carries out the reaction Preferential cleavage: hydrophobic, preferably aromatic, residues in P1 and P1' positions. Cleaves 1-Phe-|-Val-2, 4-Gln-|-His-5, 13-Glu-|-Ala-14, 14-Ala-|-Leu-15, 15-Leu-|-Tyr-16, 16-Tyr-|-Leu-17, 23-Gly-|-Phe-24, 24-Phe-|-Phe-25 and 25-Phe-|-Tyr-26 bonds in the B chain of insulin.. In terms of biological role, shows particularly broad specificity; although bonds involving phenylalanine and leucine are preferred, many others are also cleaved to some extent. The protein is Pepsin A-3 (PGA3) of Homo sapiens (Human).